Here is a 607-residue protein sequence, read N- to C-terminus: Elongation factor 4 (607 aa).

Residues 11–193 (ENIRNFSIIA…KIVEVVPPPE (183 aa)) enclose the tr-type G domain. Residues 23–28 (DHGKST) and 140–143 (NKID) contribute to the GTP site.

The protein belongs to the TRAFAC class translation factor GTPase superfamily. Classic translation factor GTPase family. LepA subfamily.

It localises to the cell membrane. It catalyses the reaction GTP + H2O = GDP + phosphate + H(+). Functionally, required for accurate and efficient protein synthesis under certain stress conditions. May act as a fidelity factor of the translation reaction, by catalyzing a one-codon backward translocation of tRNAs on improperly translocated ribosomes. Back-translocation proceeds from a post-translocation (POST) complex to a pre-translocation (PRE) complex, thus giving elongation factor G a second chance to translocate the tRNAs correctly. Binds to ribosomes in a GTP-dependent manner. This is Elongation factor 4 from Staphylococcus haemolyticus (strain JCSC1435).